The sequence spans 468 residues: Cysteine--tRNA ligase (468 aa).

Cys28 contributes to the Zn(2+) binding site. The short motif at 30–40 is the 'HIGH' region element; it reads PTVYNYIHIGN. Cys212, His237, and Glu241 together coordinate Zn(2+). The short motif at 271–275 is the 'KMSKS' region element; sequence KMSKS. Lys274 is a binding site for ATP.

It belongs to the class-I aminoacyl-tRNA synthetase family. As to quaternary structure, monomer. It depends on Zn(2+) as a cofactor.

It localises to the cytoplasm. It catalyses the reaction tRNA(Cys) + L-cysteine + ATP = L-cysteinyl-tRNA(Cys) + AMP + diphosphate. This chain is Cysteine--tRNA ligase, found in Lacticaseibacillus casei (strain BL23) (Lactobacillus casei).